The primary structure comprises 611 residues: tRNA uridine 5-carboxymethylaminomethyl modification enzyme MnmG (611 aa).

Residues 12 to 17, valine 124, and serine 179 each bind FAD; that span reads GGGHAG. 271 to 285 lines the NAD(+) pocket; that stretch reads GPRYCPSVEDKIVRF. An FAD-binding site is contributed by glutamine 368.

This sequence belongs to the MnmG family. Homodimer. Heterotetramer of two MnmE and two MnmG subunits. FAD serves as cofactor.

The protein localises to the cytoplasm. In terms of biological role, NAD-binding protein involved in the addition of a carboxymethylaminomethyl (cmnm) group at the wobble position (U34) of certain tRNAs, forming tRNA-cmnm(5)s(2)U34. The polypeptide is tRNA uridine 5-carboxymethylaminomethyl modification enzyme MnmG (Mycoplasma mobile (strain ATCC 43663 / 163K / NCTC 11711) (Mesomycoplasma mobile)).